Reading from the N-terminus, the 391-residue chain is Multidrug resistance protein MdtL (391 aa).

Residues 1–3 (MSR) are Cytoplasmic-facing. A helical transmembrane segment spans residues 4-24 (FLICSFALVLLYPAGIDMYLV). Residues 25–41 (GLPRIAADLNASEAQLH) lie on the Periplasmic side of the membrane. A helical transmembrane segment spans residues 42 to 62 (IAFSVYLAGMAAAMLFAGKVA). The Cytoplasmic segment spans residues 63 to 68 (DRSGRK). The chain crosses the membrane as a helical span at residues 69 to 89 (PVAIPGAALFIIASVFCSLAE). Residues 90–92 (TST) lie on the Periplasmic side of the membrane. Residues 93–113 (LFLAGRFLQGLGAGCCYVVAF) form a helical membrane-spanning segment. At 114–130 (AILRDTLDDRRRAKVLS) the chain is on the cytoplasmic side. The chain crosses the membrane as a helical span at residues 131 to 151 (LLNGITCIIPVLAPVLGHLIM). The Periplasmic segment spans residues 152–157 (LKFPWQ). A helical membrane pass occupies residues 158-178 (SLFWAMAMMGIAVLMLSLFIL). The Cytoplasmic segment spans residues 179-202 (KETRPASPAASDKPRENSESLLNR). Residues 203–222 (FFLSRVVITTLSVSVILTFV) form a helical membrane-spanning segment. The Periplasmic portion of the chain corresponds to 223-244 (NTSPVLLMEIMGFERGEYATIM). A helical transmembrane segment spans residues 245–265 (ALTAGVSMTFSFSTPFALGIF). Residues 266-268 (KPR) are Cytoplasmic-facing. A helical transmembrane segment spans residues 269-289 (TLMITSQVLFLAAGITLAVSP). At 290-292 (SHA) the chain is on the periplasmic side. The chain crosses the membrane as a helical span at residues 293–313 (VSLFGITLICAGFSVGFGVAM). Over 314 to 330 (SQALGPFSLRAGVASST) the chain is Cytoplasmic. Residues 331–351 (LGIAQVCGSSLWIWLAAVVGI) traverse the membrane as a helical segment. At 352–355 (GAWN) the chain is on the periplasmic side. Residues 356–376 (MLIGILIACSIVSLLLIMFVA) form a helical membrane-spanning segment. Over 377-391 (PGRPVAAHEEIHHHA) the chain is Cytoplasmic.

Belongs to the major facilitator superfamily. DHA1 family. MdtL (TC 2.A.1.2.22) subfamily.

Its subcellular location is the cell inner membrane. This chain is Multidrug resistance protein MdtL (mdtL), found in Shigella flexneri.